The primary structure comprises 99 residues: Fetal and adult testis-expressed transcript protein homolog (99 aa).

Residues 79–98 (AALFTLLVSVCIANLWLWVH) traverse the membrane as a helical segment.

In terms of assembly, interacts with BIK and RNF183. Interacts with IMMT/MIC60and EMD.

It localises to the mitochondrion. It is found in the mitochondrion outer membrane. The protein localises to the endoplasmic reticulum membrane. Its function is as follows. Involved in the regulation of endoplasmic reticulum (ER)-mitochondria coupling. Negatively regulates the ER-mitochondria distance and Ca(2+) transfer from ER to mitochondria possibly implicating it in the regulation of apoptosis. May collaborate with RNF183 to restrain BIK protein levels thus regulating apoptotic signaling. In Mus musculus (Mouse), this protein is Fetal and adult testis-expressed transcript protein homolog (Fate1).